The chain runs to 446 residues: Mannosyltransferase KTR6 (446 aa).

Topologically, residues 1–8 are cytoplasmic; it reads MHVLLSKK. A helical; Signal-anchor for type II membrane protein membrane pass occupies residues 9 to 29; the sequence is IARFLLISFVFVLALMVTINH. The stem region stretch occupies residues 30 to 114; that stretch reads PKTKQMSEQY…MVPSYINHRG (85 aa). Residues 30–446 are Lumenal-facing; the sequence is PKTKQMSEQY…DKPEGWDRLP (417 aa). N82 and N98 each carry an N-linked (GlcNAc...) asparagine glycan. The segment at 115–446 is catalytic; that stretch reads SPPKACFVSL…DKPEGWDRLP (332 aa). E334 acts as the Nucleophile in catalysis.

This sequence belongs to the glycosyltransferase 15 family.

Its subcellular location is the membrane. Its pathway is protein modification; protein glycosylation. In terms of biological role, glycosyltransferase that transfers an alpha-D-mannosyl residue from GDP-mannose into lipid-linked oligosaccharide, forming an alpha-(1-&gt;2)-D-mannosyl-D-mannose linkage. Required for addition of mannosylphosphate in yeast mannan. Recognizes any oligosaccharides with at least one alpha-1,2-linked mannobiose unit. This is Mannosyltransferase KTR6 (KTR6) from Saccharomyces cerevisiae (strain ATCC 204508 / S288c) (Baker's yeast).